Reading from the N-terminus, the 415-residue chain is Hepatocyte nuclear factor 3-beta (415 aa).

The fork-head DNA-binding region spans 150–244 (KPPYSYISLI…ENGCYLRRQK (95 aa)). A compositionally biased stretch (basic and acidic residues) spans 251–262 (KMSMKEPGRKGG). The disordered stretch occupies residues 251 to 324 (KMSMKEPGRK…GQHLMSQHHS (74 aa)). Residues 266–277 (SANSSSDSCNGN) are compositionally biased toward low complexity. Residues 310–323 (SPVSQGQHLMSQHH) show a composition bias toward polar residues.

Its subcellular location is the nucleus. Transcription activator for a number of liver genes. Interacts with the cis-acting regulatory regions of these genes. This is Hepatocyte nuclear factor 3-beta (foxa2) from Oryzias latipes (Japanese rice fish).